The following is a 268-amino-acid chain: Protein CONTINUOUS VASCULAR RING 1 (268 aa).

The Cytoplasmic portion of the chain corresponds to 1 to 70; sequence MGDEKPVIVM…GWASKKFMTG (70 aa). The interval 21–48 is disordered; that stretch reads IPVADSGDKDDGSSSKPSSSSSASSSSH. A compositionally biased stretch (low complexity) spans 34–48; it reads SSKPSSSSSASSSSH. A helical membrane pass occupies residues 71 to 91; that stretch reads CVILLPIAITFYITWWFIHFV. Over 92–103 the chain is Extracellular; it reads DGFFSPIYAQLG. Residues 104 to 124 traverse the membrane as a helical segment; it reads INVFGFGFLTSIAFIFLVGVF. Residues 125–268 lie on the Cytoplasmic side of the membrane; sequence MSSWLGASVL…LASIDRATSL (144 aa).

It belongs to the plant COV1 protein family. As to expression, mostly expressed in flowers and stems, and, to a lower extent, in roots and leaves.

The protein localises to the membrane. Involved in the regulation of vascular patterning in the stem, probably by negatively regulating the differentiation of vascular tissue. The polypeptide is Protein CONTINUOUS VASCULAR RING 1 (Arabidopsis thaliana (Mouse-ear cress)).